The chain runs to 260 residues: Manganese transport system ATP-binding protein MntA (260 aa).

In terms of domain architecture, ABC transporter spans 10-245 (ISVDGVSVTY…NLELTFGGLP (236 aa)). 43-50 (GPNGSGKS) serves as a coordination point for ATP.

This sequence belongs to the ABC transporter superfamily.

In terms of biological role, part of an ATP-driven transport system for manganese. This Synechocystis sp. (strain ATCC 27184 / PCC 6803 / Kazusa) protein is Manganese transport system ATP-binding protein MntA (mntA).